The sequence spans 190 residues: Transcription factor E (190 aa).

An HTH TFE/IIEalpha-type domain is found at 4–87; it reads KNKALLEIAK…YWHLETKRLP (84 aa). The segment at 170 to 190 is disordered; that stretch reads PSPKKEKKKTRAKAKRKTRKK. Basic residues predominate over residues 174-190; the sequence is KEKKKTRAKAKRKTRKK.

Belongs to the TFE family. In terms of assembly, monomer. Interaction with RNA polymerase subunits RpoF and RpoE is necessary for Tfe stimulatory transcription activity. Able to interact with Tbp and RNA polymerase in the absence of DNA promoter. Interacts both with the preinitiation and elongation complexes.

Functionally, transcription factor that plays a role in the activation of archaeal genes transcribed by RNA polymerase. Facilitates transcription initiation by enhancing TATA-box recognition by TATA-box-binding protein (Tbp), and transcription factor B (Tfb) and RNA polymerase recruitment. Not absolutely required for transcription in vitro, but particularly important in cases where Tbp or Tfb function is not optimal. It dynamically alters the nucleic acid-binding properties of RNA polymerases by stabilizing the initiation complex and destabilizing elongation complexes. Seems to translocate with the RNA polymerase following initiation and acts by binding to the non template strand of the transcription bubble in elongation complexes. The sequence is that of Transcription factor E from Pyrococcus abyssi (strain GE5 / Orsay).